An 802-amino-acid polypeptide reads, in one-letter code: Phenylalanine--tRNA ligase beta subunit (802 aa).

The region spanning 39 to 154 (AEGLSKLVVG…EDAVPGDSIF (116 aa)) is the tRNA-binding domain. A B5 domain is found at 407–482 (TEPVQVSTSL…RIYGYEKLPT (76 aa)). Mg(2+)-binding residues include Asp-460, Asp-466, Glu-469, and Glu-470. Residues 709 to 802 (TKFPAVSRDI…LTEKVEAEVR (94 aa)) enclose the FDX-ACB domain.

It belongs to the phenylalanyl-tRNA synthetase beta subunit family. Type 1 subfamily. Tetramer of two alpha and two beta subunits. The cofactor is Mg(2+).

The protein localises to the cytoplasm. The enzyme catalyses tRNA(Phe) + L-phenylalanine + ATP = L-phenylalanyl-tRNA(Phe) + AMP + diphosphate + H(+). This chain is Phenylalanine--tRNA ligase beta subunit, found in Streptococcus thermophilus (strain CNRZ 1066).